A 353-amino-acid polypeptide reads, in one-letter code: Photosystem II protein D1 (353 aa).

Threonine 2 carries the N-acetylthreonine modification. The residue at position 2 (threonine 2) is a Phosphothreonine. A run of 3 helical transmembrane segments spans residues 29-46 (YIGW…TATS), 118-133 (HFLL…EWEL), and 142-156 (WIAV…AAAA). Histidine 118 contacts chlorophyll a. Tyrosine 126 is a binding site for pheophytin a. The [CaMn4O5] cluster site is built by aspartate 170 and glutamate 189. Residues 197–218 (FHMLGVAGVFGGSLFSAMHGSL) traverse the membrane as a helical segment. Residue histidine 198 coordinates chlorophyll a. A quinone contacts are provided by residues histidine 215 and 264–265 (SF). Histidine 215 contributes to the Fe cation binding site. Residue histidine 272 participates in Fe cation binding. The helical transmembrane segment at 274–288 (FLAAWPVVGIWFTAL) threads the bilayer. Residues histidine 332, glutamate 333, aspartate 342, and alanine 344 each contribute to the [CaMn4O5] cluster site. Positions 345–353 (AVEAPSING) are excised as a propeptide.

It belongs to the reaction center PufL/M/PsbA/D family. In terms of assembly, PSII is composed of 1 copy each of membrane proteins PsbA, PsbB, PsbC, PsbD, PsbE, PsbF, PsbH, PsbI, PsbJ, PsbK, PsbL, PsbM, PsbT, PsbX, PsbY, PsbZ, Psb30/Ycf12, at least 3 peripheral proteins of the oxygen-evolving complex and a large number of cofactors. It forms dimeric complexes. Requires The D1/D2 heterodimer binds P680, chlorophylls that are the primary electron donor of PSII, and subsequent electron acceptors. It shares a non-heme iron and each subunit binds pheophytin, quinone, additional chlorophylls, carotenoids and lipids. D1 provides most of the ligands for the Mn4-Ca-O5 cluster of the oxygen-evolving complex (OEC). There is also a Cl(-1) ion associated with D1 and D2, which is required for oxygen evolution. The PSII complex binds additional chlorophylls, carotenoids and specific lipids. as cofactor. In terms of processing, tyr-161 forms a radical intermediate that is referred to as redox-active TyrZ, YZ or Y-Z. C-terminally processed by CTPA; processing is essential to allow assembly of the oxygen-evolving complex and thus photosynthetic growth.

It localises to the plastid. It is found in the chloroplast thylakoid membrane. It catalyses the reaction 2 a plastoquinone + 4 hnu + 2 H2O = 2 a plastoquinol + O2. Functionally, photosystem II (PSII) is a light-driven water:plastoquinone oxidoreductase that uses light energy to abstract electrons from H(2)O, generating O(2) and a proton gradient subsequently used for ATP formation. It consists of a core antenna complex that captures photons, and an electron transfer chain that converts photonic excitation into a charge separation. The D1/D2 (PsbA/PsbD) reaction center heterodimer binds P680, the primary electron donor of PSII as well as several subsequent electron acceptors. The polypeptide is Photosystem II protein D1 (Vitis vinifera (Grape)).